Here is a 259-residue protein sequence, read N- to C-terminus: Expansin-B4 (259 aa).

A signal peptide spans M1–C23. Residue N25 is glycosylated (N-linked (GlcNAc...) asparagine). In terms of domain architecture, Expansin-like EG45 spans G51–T161. Cystine bridges form between C54-C83, C86-C156, and C91-C97. The region spanning Y174 to S255 is the Expansin-like CBD domain.

The protein belongs to the expansin family. Expansin B subfamily.

The protein localises to the secreted. It is found in the cell wall. Its subcellular location is the membrane. Functionally, may cause loosening and extension of plant cell walls by disrupting non-covalent bonding between cellulose microfibrils and matrix glucans. No enzymatic activity has been found. The protein is Expansin-B4 (EXPB4) of Arabidopsis thaliana (Mouse-ear cress).